The primary structure comprises 378 residues: UPF0754 membrane protein BCA_0919 (378 aa).

The next 2 membrane-spanning stretches (helical) occupy residues 1–21 (MNIWLSMLTTTGLGAIIGGFT) and 357–377 (YLGALLGGMIGIVQGLLLLFL).

Belongs to the UPF0754 family.

Its subcellular location is the cell membrane. This chain is UPF0754 membrane protein BCA_0919, found in Bacillus cereus (strain 03BB102).